A 216-amino-acid chain; its full sequence is Phosphatidylserine decarboxylase proenzyme (216 aa).

Catalysis depends on Ser183, which acts as the Schiff-base intermediate with substrate; via pyruvic acid. A Pyruvic acid (Ser); by autocatalysis modification is found at Ser183.

This sequence belongs to the phosphatidylserine decarboxylase family. PSD-A subfamily. In terms of assembly, heterodimer of a large membrane-associated beta subunit and a small pyruvoyl-containing alpha subunit. Requires pyruvate as cofactor. Is synthesized initially as an inactive proenzyme. Formation of the active enzyme involves a self-maturation process in which the active site pyruvoyl group is generated from an internal serine residue via an autocatalytic post-translational modification. Two non-identical subunits are generated from the proenzyme in this reaction, and the pyruvate is formed at the N-terminus of the alpha chain, which is derived from the carboxyl end of the proenzyme. The post-translation cleavage follows an unusual pathway, termed non-hydrolytic serinolysis, in which the side chain hydroxyl group of the serine supplies its oxygen atom to form the C-terminus of the beta chain, while the remainder of the serine residue undergoes an oxidative deamination to produce ammonia and the pyruvoyl prosthetic group on the alpha chain.

Its subcellular location is the cell membrane. The enzyme catalyses a 1,2-diacyl-sn-glycero-3-phospho-L-serine + H(+) = a 1,2-diacyl-sn-glycero-3-phosphoethanolamine + CO2. Its pathway is phospholipid metabolism; phosphatidylethanolamine biosynthesis; phosphatidylethanolamine from CDP-diacylglycerol: step 2/2. In terms of biological role, catalyzes the formation of phosphatidylethanolamine (PtdEtn) from phosphatidylserine (PtdSer). This chain is Phosphatidylserine decarboxylase proenzyme, found in Cupriavidus taiwanensis (strain DSM 17343 / BCRC 17206 / CCUG 44338 / CIP 107171 / LMG 19424 / R1) (Ralstonia taiwanensis (strain LMG 19424)).